Reading from the N-terminus, the 492-residue chain is Catalase isozyme 2 (492 aa).

Catalysis depends on residues H65 and N138. Heme is bound at residue Y348.

This sequence belongs to the catalase family. As to quaternary structure, homotetramer. Heme serves as cofactor.

It is found in the peroxisome. The protein resides in the glyoxysome. It catalyses the reaction 2 H2O2 = O2 + 2 H2O. Occurs in almost all aerobically respiring organisms and serves to protect cells from the toxic effects of hydrogen peroxide. In Solanum tuberosum (Potato), this protein is Catalase isozyme 2 (CAT2).